Consider the following 227-residue polypeptide: Phosphoribosylformylglycinamidine synthase subunit PurQ (227 aa).

One can recognise a Glutamine amidotransferase type-1 domain in the interval 3–225 (FAVIVFPGSN…VKQGAHHVKT (223 aa)). The active-site Nucleophile is the cysteine 86. Residues histidine 194 and glutamate 196 contribute to the active site.

In terms of assembly, part of the FGAM synthase complex composed of 1 PurL, 1 PurQ and 2 PurS subunits.

The protein localises to the cytoplasm. The enzyme catalyses N(2)-formyl-N(1)-(5-phospho-beta-D-ribosyl)glycinamide + L-glutamine + ATP + H2O = 2-formamido-N(1)-(5-O-phospho-beta-D-ribosyl)acetamidine + L-glutamate + ADP + phosphate + H(+). The catalysed reaction is L-glutamine + H2O = L-glutamate + NH4(+). The protein operates within purine metabolism; IMP biosynthesis via de novo pathway; 5-amino-1-(5-phospho-D-ribosyl)imidazole from N(2)-formyl-N(1)-(5-phospho-D-ribosyl)glycinamide: step 1/2. Its function is as follows. Part of the phosphoribosylformylglycinamidine synthase complex involved in the purines biosynthetic pathway. Catalyzes the ATP-dependent conversion of formylglycinamide ribonucleotide (FGAR) and glutamine to yield formylglycinamidine ribonucleotide (FGAM) and glutamate. The FGAM synthase complex is composed of three subunits. PurQ produces an ammonia molecule by converting glutamine to glutamate. PurL transfers the ammonia molecule to FGAR to form FGAM in an ATP-dependent manner. PurS interacts with PurQ and PurL and is thought to assist in the transfer of the ammonia molecule from PurQ to PurL. This Exiguobacterium sibiricum (strain DSM 17290 / CCUG 55495 / CIP 109462 / JCM 13490 / 255-15) protein is Phosphoribosylformylglycinamidine synthase subunit PurQ.